The primary structure comprises 531 residues: Protein SHORT-ROOT (531 aa).

Positions 14–39 (QQSDSIITNQSSLSRTSTTTTGSPQT) are enriched in low complexity. Disordered stretches follow at residues 14-40 (QQSD…PQTA) and 65-103 (SSSS…PSST). Residues 81 to 93 (TYYSPFTTPTQYH) show a composition bias toward polar residues. Over residues 94–103 (PATSSTPSST) the composition is skewed to low complexity. The GRAS domain occupies 134–529 (FDFSANAKWA…QPVVWASAWR (396 aa)). The interval 141–206 (KWADSVLLEA…GSGERCYRTM (66 aa)) is leucine repeat I (LRI). The tract at residues 225–290 (VLKFQEVSPW…DDTPHLRLTT (66 aa)) is VHIID. The VHIID motif lies at 256 to 260 (IHIVD). The tract at residues 310-343 (EIGNRMEKFARLMGVPFKFNIIHHVGDLSEFDLN) is leucine repeat II (LRII). Residues 353-449 (LAINCVGAMH…ERAAGRAIVD (97 aa)) are PFYRE. Residues 452–529 (ACEPSDSTER…QPVVWASAWR (78 aa)) form an SAW region.

Belongs to the GRAS family. Interacts with SCR, SCL23, JKD and MGP. Interacts with SIEL. Association to endosomes and intercellular movement of SHR rely on the interaction with SIEL. Expressed in the stele and the quiescent center. Not detected in the ground tissue cell lineage. The SHR protein moves from the stele to a single layer of adjacent cells, where it enters the nucleus.

The protein localises to the cytoplasm. Its subcellular location is the nucleus. It is found in the early endosome. It localises to the late endosome. The protein resides in the recycling endosome. In terms of biological role, transcription factor required for quiescent center cells specification and maintenance of surrounding stem cells, and for the asymmetric cell division involved in radial pattern formation in roots. Essential for both cell division and cell specification. Regulates the radial organization of the shoot axial organs and is required for normal shoot gravitropism. Directly controls the transcription of SCR, and when associated with SCR, of MGP, RLK, TRI, NUC and SCL3. This is Protein SHORT-ROOT from Arabidopsis thaliana (Mouse-ear cress).